The chain runs to 304 residues: Oxygen-dependent coproporphyrinogen-III oxidase (304 aa).

Ser94 is a binding site for substrate. A divalent metal cation is bound by residues His98 and His108. Residue His108 is the Proton donor of the active site. 110-112 (NVR) is a binding site for substrate. 2 residues coordinate a divalent metal cation: His147 and His177. Positions 242–277 (YVEFNLVYDRGTLFGLQTGGRTESILMSMPPLVRWE) are important for dimerization. 260 to 262 (GGR) is a substrate binding site.

It belongs to the aerobic coproporphyrinogen-III oxidase family. In terms of assembly, homodimer. Requires a divalent metal cation as cofactor.

The protein resides in the cytoplasm. The enzyme catalyses coproporphyrinogen III + O2 + 2 H(+) = protoporphyrinogen IX + 2 CO2 + 2 H2O. The protein operates within porphyrin-containing compound metabolism; protoporphyrin-IX biosynthesis; protoporphyrinogen-IX from coproporphyrinogen-III (O2 route): step 1/1. Its function is as follows. Involved in the heme biosynthesis. Catalyzes the aerobic oxidative decarboxylation of propionate groups of rings A and B of coproporphyrinogen-III to yield the vinyl groups in protoporphyrinogen-IX. This Shewanella halifaxensis (strain HAW-EB4) protein is Oxygen-dependent coproporphyrinogen-III oxidase.